Here is a 237-residue protein sequence, read N- to C-terminus: Uridylate kinase (237 aa).

Lysine 11–glycine 14 is an ATP binding site. Glycine 53 contacts UMP. The ATP site is built by glycine 54 and arginine 58. Residues aspartate 73 and threonine 134 to threonine 141 each bind UMP. ATP-binding residues include threonine 161, tyrosine 167, and aspartate 170.

It belongs to the UMP kinase family. In terms of assembly, homohexamer.

The protein resides in the cytoplasm. It carries out the reaction UMP + ATP = UDP + ADP. It functions in the pathway pyrimidine metabolism; CTP biosynthesis via de novo pathway; UDP from UMP (UMPK route): step 1/1. Its activity is regulated as follows. Inhibited by UTP. Functionally, catalyzes the reversible phosphorylation of UMP to UDP. The polypeptide is Uridylate kinase (Paraburkholderia xenovorans (strain LB400)).